The primary structure comprises 177 residues: Shikimate kinase (177 aa).

17–22 contacts ATP; the sequence is GVGKTT. Thr-21 provides a ligand contact to Mg(2+). The substrate site is built by Asp-39, Arg-63, and Gly-86. Arg-125 is a binding site for ATP. Residue Arg-143 coordinates substrate. Arg-159 provides a ligand contact to ATP.

Belongs to the shikimate kinase family. In terms of assembly, monomer. It depends on Mg(2+) as a cofactor.

It localises to the cytoplasm. It catalyses the reaction shikimate + ATP = 3-phosphoshikimate + ADP + H(+). Its pathway is metabolic intermediate biosynthesis; chorismate biosynthesis; chorismate from D-erythrose 4-phosphate and phosphoenolpyruvate: step 5/7. In terms of biological role, catalyzes the specific phosphorylation of the 3-hydroxyl group of shikimic acid using ATP as a cosubstrate. The polypeptide is Shikimate kinase (Bacillus licheniformis (strain ATCC 14580 / DSM 13 / JCM 2505 / CCUG 7422 / NBRC 12200 / NCIMB 9375 / NCTC 10341 / NRRL NRS-1264 / Gibson 46)).